Here is a 197-residue protein sequence, read N- to C-terminus: Recombination protein RecR (197 aa).

The C4-type zinc-finger motif lies at 56-71 (CSVCGNFDTIDPCAIC). The 96-residue stretch at 79–174 (SMLCVVEDVA…TVSGLAHGVP (96 aa)) folds into the Toprim domain.

It belongs to the RecR family.

Functionally, may play a role in DNA repair. It seems to be involved in an RecBC-independent recombinational process of DNA repair. It may act with RecF and RecO. The chain is Recombination protein RecR from Paramagnetospirillum magneticum (strain ATCC 700264 / AMB-1) (Magnetospirillum magneticum).